Here is a 353-residue protein sequence, read N- to C-terminus: MTIAIGKFTKDENDLFDIMDDWLRRDRFVFVGWSGLLLFPCAYFAVGGWFTGTTFVTSWYTHGLASSYLEGCNFLTAAVSTPANSLAHSLLLLWGPEAQGDFTRWCQLGGLWTFVALHGAFGLIGFMLRQFELARSVQLRPYNAIAFSGPIAVFVSVFLIYPLGQSGWFFAPSFGVAAIFRFILFFQGFHNWTLNPFHMMGVAGVLGAALLCAIHGATVENTLFEDGDGANTFRAFNPTQAEETYSMVTANRFWSQIFGVAFSNKRWLHFFMLFVPVTGLWMSALGVVGLALNLRAYDFVSQEIRAAEDPEFETFYTKNILLNEGIRAWMAAQDQPHENLIFPEEVLPRGNAL.

T2 is subject to N-acetylthreonine. T2 is subject to Phosphothreonine. Residues 41–61 (CAYFAVGGWFTGTTFVTSWYT) traverse the membrane as a helical segment. H118 is a chlorophyll a binding site. A helical transmembrane segment spans residues 125–141 (GFMLRQFELARSVQLRP). Pheophytin a-binding residues include Q130 and N143. The helical transmembrane segment at 153-166 (VFVSVFLIYPLGQS) threads the bilayer. H198 contacts chlorophyll a. The chain crosses the membrane as a helical span at residues 208 to 228 (AALLCAIHGATVENTLFEDGD). Residues H215 and F262 each contribute to the a plastoquinone site. H215 provides a ligand contact to Fe cation. H269 is a binding site for Fe cation. The helical transmembrane segment at 279–295 (GLWMSALGVVGLALNLR) threads the bilayer.

This sequence belongs to the reaction center PufL/M/PsbA/D family. PSII is composed of 1 copy each of membrane proteins PsbA, PsbB, PsbC, PsbD, PsbE, PsbF, PsbH, PsbI, PsbJ, PsbK, PsbL, PsbM, PsbT, PsbX, PsbY, PsbZ, Psb30/Ycf12, at least 3 peripheral proteins of the oxygen-evolving complex and a large number of cofactors. It forms dimeric complexes. The D1/D2 heterodimer binds P680, chlorophylls that are the primary electron donor of PSII, and subsequent electron acceptors. It shares a non-heme iron and each subunit binds pheophytin, quinone, additional chlorophylls, carotenoids and lipids. There is also a Cl(-1) ion associated with D1 and D2, which is required for oxygen evolution. The PSII complex binds additional chlorophylls, carotenoids and specific lipids. is required as a cofactor.

It localises to the plastid. Its subcellular location is the chloroplast thylakoid membrane. The enzyme catalyses 2 a plastoquinone + 4 hnu + 2 H2O = 2 a plastoquinol + O2. Its function is as follows. Photosystem II (PSII) is a light-driven water:plastoquinone oxidoreductase that uses light energy to abstract electrons from H(2)O, generating O(2) and a proton gradient subsequently used for ATP formation. It consists of a core antenna complex that captures photons, and an electron transfer chain that converts photonic excitation into a charge separation. The D1/D2 (PsbA/PsbD) reaction center heterodimer binds P680, the primary electron donor of PSII as well as several subsequent electron acceptors. D2 is needed for assembly of a stable PSII complex. This is Photosystem II D2 protein from Solanum bulbocastanum (Wild potato).